The primary structure comprises 732 residues: Zinc/cadmium/lead-transporting P-type ATPase (732 aa).

Residues 1–124 lie on the Cytoplasmic side of the membrane; it reads MSTPDNHGKK…QAADEPQASR (124 aa). Residues 48–112 form the HMA domain; the sequence is TRYSWKVSGM…AVQKAGYSLR (65 aa). Zn(2+)-binding residues include aspartate 58, cysteine 59, and cysteine 62. The helical transmembrane segment at 125–145 threads the bilayer; the sequence is LKENLPLITLIVMMAISWGLE. Residue glutamine 146 is a topological domain, periplasmic. Residues 147 to 167 form a helical membrane-spanning segment; the sequence is FNHPFGQLAFIATTLVGLYPI. Topologically, residues 168–179 are cytoplasmic; that stretch reads ARQALRLIKSGS. A helical membrane pass occupies residues 180-197; it reads YFAIETLMSVAAIGALFI. Topologically, residues 198–202 are periplasmic; that stretch reads GATAE. The chain crosses the membrane as a helical span at residues 203-222; sequence AAMVLLLFLIGERLEGWAAS. At 223-356 the chain is on the cytoplasmic side; that stretch reads RARQGVSALM…IDRFSRIYTP (134 aa). A helical transmembrane segment spans residues 357–377; sequence AIMAVALLVTLVPPLLFAASW. The Periplasmic segment spans residues 378–383; it reads QEWIYK. The helical transmembrane segment at 384 to 404 threads the bilayer; that stretch reads GLTLLLIGCPCALVISTPAAI. Residues cysteine 392 and cysteine 394 each contribute to the Zn(2+) site. Residues 405–685 lie on the Cytoplasmic side of the membrane; sequence TSGLAAAARR…RATHANIRQN (281 aa). The active-site 4-aspartylphosphate intermediate is aspartate 436. Positions 436, 438, and 628 each coordinate Mg(2+). Residues 686–702 form a helical membrane-spanning segment; it reads ITIALGLKGIFLVTTLL. Residues 703–707 are Periplasmic-facing; it reads GMTGL. The helical transmembrane segment at 708–729 threads the bilayer; the sequence is WLAVLADTGATVLVTANALRLL. Aspartate 714 is a binding site for Zn(2+). Topologically, residues 730–732 are cytoplasmic; it reads RRR.

Belongs to the cation transport ATPase (P-type) (TC 3.A.3) family. Type IB subfamily.

It localises to the cell inner membrane. The catalysed reaction is Pb(2+)(in) + ATP + H2O = Pb(2+)(out) + ADP + phosphate + H(+). It carries out the reaction Zn(2+)(in) + ATP + H2O = Zn(2+)(out) + ADP + phosphate + H(+). It catalyses the reaction Cd(2+)(in) + ATP + H2O = Cd(2+)(out) + ADP + phosphate + H(+). Functionally, confers resistance to zinc, cadmium and lead. Couples the hydrolysis of ATP with the export of zinc, cadmium or lead. The polypeptide is Zinc/cadmium/lead-transporting P-type ATPase (Shigella sonnei (strain Ss046)).